The primary structure comprises 632 residues: Dihydrolipoyllysine-residue acetyltransferase component of pyruvate dehydrogenase complex, mitochondrial (632 aa).

Residues 1–77 (MWRVCARRVQ…LLGSPSRRSY (77 aa)) constitute a mitochondrion transit peptide. Lipoyl-binding domains follow at residues 82–158 (HQKV…CITV) and 208–284 (HMQI…CIIV). Phosphoserine is present on Ser-91. Lys-123 and Lys-249 each carry N6-lipoyllysine. A Peripheral subunit-binding (PSBD) domain is found at 342-379 (FVSPLAKKLAAEKGIDLTQVKGTGPEGRIIKKDIDSFV). Arg-446 is a CoA binding site. At Lys-451 the chain carries N6-acetyllysine. An N6-succinyllysine modification is found at Lys-458. CoA is bound at residue Ser-460. Residue Lys-532 is modified to N6-succinyllysine. CoA is bound by residues Ser-551, Asn-552, and Gly-576. Residues His-605 and Asp-609 contribute to the active site.

Belongs to the 2-oxoacid dehydrogenase family. In terms of assembly, part of the pyruvate dehydrogenase complex (PDHc) that is a multi-enzyme complex composed of multiple copies of three enzymes, pyruvate dehydrogenase (subunits PDH1A and PDHB, E1 component), dihydrolipoamide acetyltransferase (DLAT, E2 component), and dihydrolipoamide dehydrogenase (DLD, E3 component) to which is added an additional protein the E3-binding protein (PDHX, E3BP). In terms of structural architecture, the E2 and E3BP components assemble into a 60meric central core with icosahedral symmetry. The central core is decorated with E1 and E3 proteins. Currently, two alternative models for the E2:E3BP stoichiometry are considered as being either 48:12 (E2(48)-E3BP(12)) or 40:20 (E2(40)-E3BP(20)). Interacts with PDK2 and PDK3. Interacts with SIRT4. Interacts with PDHB. The cofactor is (R)-lipoate. Delipoylated at Lys-123 and Lys-249 by SIRT4, delipoylation decreases the PHD complex activity. In terms of tissue distribution, expressed in flagella of epididymal sperm.

The protein localises to the mitochondrion matrix. It catalyses the reaction N(6)-[(R)-dihydrolipoyl]-L-lysyl-[protein] + acetyl-CoA = N(6)-[(R)-S(8)-acetyldihydrolipoyl]-L-lysyl-[protein] + CoA. Functionally, as part of the pyruvate dehydrogenase complex, catalyzes the transfers of an acetyl group to a lipoic acid moiety. The pyruvate dehydrogenase complex, catalyzes the overall conversion of pyruvate to acetyl-CoA and CO(2), and thereby links cytoplasmic glycolysis and the mitochondrial tricarboxylic acid (TCA) cycle. This chain is Dihydrolipoyllysine-residue acetyltransferase component of pyruvate dehydrogenase complex, mitochondrial, found in Rattus norvegicus (Rat).